Consider the following 374-residue polypeptide: Arrestin domain-containing protein 15 (374 aa).

Residues 344–374 (HHLNRSKAKVSKTEQQQRKTRNIVEENPYFR) form a disordered region.

It belongs to the arrestin family.

The polypeptide is Arrestin domain-containing protein 15 (arrd-15) (Caenorhabditis elegans).